Here is a 411-residue protein sequence, read N- to C-terminus: Imidazolonepropionase (411 aa).

Residues His-78 and His-80 each contribute to the Fe(3+) site. Zn(2+) is bound by residues His-78 and His-80. The 4-imidazolone-5-propanoate site is built by Arg-87, Tyr-150, and His-183. Tyr-150 is a binding site for N-formimidoyl-L-glutamate. His-248 provides a ligand contact to Fe(3+). A Zn(2+)-binding site is contributed by His-248. Position 251 (Gln-251) interacts with 4-imidazolone-5-propanoate. Fe(3+) is bound at residue Asp-322. Asp-322 contacts Zn(2+). N-formimidoyl-L-glutamate contacts are provided by Asn-324 and Gly-326. Position 327 (Thr-327) interacts with 4-imidazolone-5-propanoate.

This sequence belongs to the metallo-dependent hydrolases superfamily. HutI family. Zn(2+) serves as cofactor. The cofactor is Fe(3+).

The protein resides in the cytoplasm. It catalyses the reaction 4-imidazolone-5-propanoate + H2O = N-formimidoyl-L-glutamate. It functions in the pathway amino-acid degradation; L-histidine degradation into L-glutamate; N-formimidoyl-L-glutamate from L-histidine: step 3/3. Its function is as follows. Catalyzes the hydrolytic cleavage of the carbon-nitrogen bond in imidazolone-5-propanoate to yield N-formimidoyl-L-glutamate. It is the third step in the universal histidine degradation pathway. This chain is Imidazolonepropionase, found in Flavobacterium psychrophilum (strain ATCC 49511 / DSM 21280 / CIP 103535 / JIP02/86).